The primary structure comprises 955 residues: MNNKKTVTNRKGMIPNRLNKFSIRKYSVGTASILVGTTLIFGLSGHEAKAAEHTNGELNQSKNETTAPSENKTTEKVDSHQLKDNTQTATADQPKVTMSDSATFKETSSNMQSPQNATASQSTTQTSNVTTNDKSSTTYSNETDKSNLTQAKDVSATPKTTTIKPRTLNRMAVNTVAAPQQGTNVNDKVHFSNIDIAIDKGHLNKDTGKTEFWATSSDVLKLKANYTIDDSVKEGDTFTFKYGQYFRPGSVRLPSQTQNLYNAQGNIIAKGIYDSTTNTTTYTFTNYVDQYTNVSGSFEQVAFAKRENATTDKTAYKMEVSLGNDTYSEEIIVDYGNKKAQPLISSTNYINNEDLSRNMTAYVNQPKNTYTKQTFVTNLTGYKFNPNAKNFKIYEVTDQNQFVDSFTPDTSKLKDVTNQFNITYSNDNKTATVDLMNGQTSSNKQYIIQQVAYPDNTSTDNGKIDYTLDTDKTKYSWSNSYSNVNGSSTANGDQKKYNLGDYVWEDTNKDGKQDANEKGIKGVYVILKDSNGKELDRTTTDENGKYQFTGLSNGTYSVEFSTPAGYTPTTANAGTDDAVDSDGLTTTGVIKDADNMTLDSGFYKTPKYSLGDYVWYDSNKDGKQDSTEKGIKGVKVTLQNEKGEVIGTTETDENGKYRFDNLDSGKYKVIFEKPAGLTQTGTNTTEDDKDADGGEVDVTITDHDDFTLDNGYYEEETSDSDSDSDSDSDSDSDSDSDSDSDSDSDSDSDSDSDSDSDSDSDSDSDSDSDSDSDSDSDSDSDSDSDSDSDSDSDSDSDSDSDSDSDSDSDSDSDSDSDSDSDSDSDSDSDSDTDSDSDSDSDSDSDSDSDSDSDSDSDSDSDSDSDSDSDSDSDSDSDSDSDSESDADSDTDSDSDAGKHTPAKPMSTVKDQHKTAKALPETGSENNNSNNGTLFGGLFAALGSLLLFGRRKKQNK.

A signal peptide spans 1–50; it reads MNNKKTVTNRKGMIPNRLNKFSIRKYSVGTASILVGTTLIFGLSGHEAKA. The disordered stretch occupies residues 51–166; that stretch reads AEHTNGELNQ…TPKTTTIKPR (116 aa). The interval 51–495 is ligand binding A region; sequence AEHTNGELNQ…GSSTANGDQK (445 aa). A compositionally biased stretch (polar residues) spans 56 to 71; that stretch reads GELNQSKNETTAPSEN. Over residues 72–83 the composition is skewed to basic and acidic residues; that stretch reads KTTEKVDSHQLK. The span at 84–114 shows a compositional bias: polar residues; it reads DNTQTATADQPKVTMSDSATFKETSSNMQSP. Over residues 115–132 the composition is skewed to low complexity; it reads QNATASQSTTQTSNVTTN. Residues 133–164 show a composition bias toward polar residues; it reads DKSSTTYSNETDKSNLTQAKDVSATPKTTTIK. CNA-B domains follow at residues 496–606 and 607–717; these read KYNL…YKTP and KYSL…EEET. The segment at 678–935 is disordered; sequence TQTGTNTTED…NNSNNGTLFG (258 aa). Acidic residues-rich tracts occupy residues 685-695 and 712-894; these read TEDDKDADGGE and YYEE…DSDS. An LPXTG sorting signal motif is present at residues 918–922; it reads LPETG. Over residues 920-935 the composition is skewed to low complexity; that stretch reads ETGSENNNSNNGTLFG. T921 bears the Pentaglycyl murein peptidoglycan amidated threonine mark. Residues 922–955 constitute a propeptide, removed by sortase; that stretch reads GSENNNSNNGTLFGGLFAALGSLLLFGRRKKQNK.

It belongs to the serine-aspartate repeat-containing protein (SDr) family. Homodimerizes; via N2-Domain. Interacts with host NRXN1; this interaction mediates bacterial attachment to host cells.

Its subcellular location is the secreted. The protein resides in the cell wall. Its function is as follows. Cell surface-associated calcium-binding protein which plays an important role in adhesion and pathogenesis. Mediates interactions with components of the extracellular matrix such as host NRXN1 to promote bacterial adhesion. This Staphylococcus aureus (strain MW2) protein is Serine-aspartate repeat-containing protein C (sdrC).